Reading from the N-terminus, the 436-residue chain is Protein translocase subunit SecY (436 aa).

Transmembrane regions (helical) follow at residues Ile-19–Gly-39, Phe-68–Leu-88, Tyr-116–Leu-136, Leu-151–Ile-171, Gly-179–Ile-199, Ile-216–Val-236, Val-269–Leu-289, Gly-313–Ile-333, Val-372–Gly-392, and Asp-395–Met-415.

The protein belongs to the SecY/SEC61-alpha family. In terms of assembly, component of the Sec protein translocase complex. Heterotrimer consisting of SecY, SecE and SecG subunits. The heterotrimers can form oligomers, although 1 heterotrimer is thought to be able to translocate proteins. Interacts with the ribosome. Interacts with SecDF, and other proteins may be involved. Interacts with SecA.

The protein resides in the cell membrane. In terms of biological role, the central subunit of the protein translocation channel SecYEG. Consists of two halves formed by TMs 1-5 and 6-10. These two domains form a lateral gate at the front which open onto the bilayer between TMs 2 and 7, and are clamped together by SecE at the back. The channel is closed by both a pore ring composed of hydrophobic SecY resides and a short helix (helix 2A) on the extracellular side of the membrane which forms a plug. The plug probably moves laterally to allow the channel to open. The ring and the pore may move independently. This chain is Protein translocase subunit SecY, found in Streptococcus gordonii (strain Challis / ATCC 35105 / BCRC 15272 / CH1 / DL1 / V288).